Consider the following 245-residue polypeptide: DNA repair protein RecO (245 aa).

It belongs to the RecO family.

In terms of biological role, involved in DNA repair and RecF pathway recombination. The sequence is that of DNA repair protein RecO from Erwinia tasmaniensis (strain DSM 17950 / CFBP 7177 / CIP 109463 / NCPPB 4357 / Et1/99).